A 428-amino-acid chain; its full sequence is Dihydroorotase (428 aa).

Residues His-56 and His-58 each contribute to the Zn(2+) site. Residues 58-60 (HLR) and Asn-90 contribute to the substrate site. Zn(2+) is bound by residues Asp-150, His-177, and His-230. Asn-276 provides a ligand contact to substrate. Residue Asp-303 coordinates Zn(2+). The active site involves Asp-303. His-307 provides a ligand contact to substrate.

The protein belongs to the metallo-dependent hydrolases superfamily. DHOase family. Class I DHOase subfamily. Zn(2+) serves as cofactor.

It catalyses the reaction (S)-dihydroorotate + H2O = N-carbamoyl-L-aspartate + H(+). It functions in the pathway pyrimidine metabolism; UMP biosynthesis via de novo pathway; (S)-dihydroorotate from bicarbonate: step 3/3. Functionally, catalyzes the reversible cyclization of carbamoyl aspartate to dihydroorotate. The polypeptide is Dihydroorotase (Streptomyces coelicolor (strain ATCC BAA-471 / A3(2) / M145)).